The chain runs to 488 residues: MDQSVQERTRIKNERYESGVIPYAKMGYWDPDYAIKATDVLALFRVTPQPGVDPVEAAAAIAGESSTATWTVVWTDLLTACDLYRAKAYRVDPVPSSPDQYFAYIAYDIDLFEEGSIANLTASIIGNVFGFKAVKALRLEDMRIPVAYLKTFQGPATGVVVERERMNNFGRPLLGATVKPKLGLSGKNYGRVVYEGLKGGLDFLKDDENINSQPFMRWRERFLFCMEGVNRASASSGEVKGHYLNVTAATMEDMYERAEFSKEVGSIICMIDLVIGYTAIQSMAKWARKNDMILHLHRAGNSTYSRQKNHGMNFRVICKWMRMAGVDHIHAGTVVGKLEGDPLMIKGFYNTLLEPHLNINLPEGLFFEQNWASLRKVMPVASGGIHCGQMHQLIDYLGDDVVLQFGGGTIGHPDGIQAGATANRVALESMLLARNEGRDYVAQGPQILRDAAKTCGPLQTALDLWKDISFNYTSTDTADFVQTPTANV.

Asparagine 127 and threonine 177 together coordinate substrate. Catalysis depends on lysine 179, which acts as the Proton acceptor. Residue lysine 181 participates in substrate binding. Positions 205, 207, and 208 each coordinate Mg(2+). An N6-carboxylysine modification is found at lysine 205. The active-site Proton acceptor is the histidine 297. Substrate is bound by residues arginine 298, histidine 330, and serine 382.

Belongs to the RuBisCO large chain family. Type I subfamily. As to quaternary structure, heterohexadecamer of 8 large chains and 8 small chains. Mg(2+) is required as a cofactor.

The protein localises to the plastid. The protein resides in the chloroplast. It catalyses the reaction 2 (2R)-3-phosphoglycerate + 2 H(+) = D-ribulose 1,5-bisphosphate + CO2 + H2O. The enzyme catalyses D-ribulose 1,5-bisphosphate + O2 = 2-phosphoglycolate + (2R)-3-phosphoglycerate + 2 H(+). In terms of biological role, ruBisCO catalyzes two reactions: the carboxylation of D-ribulose 1,5-bisphosphate, the primary event in carbon dioxide fixation, as well as the oxidative fragmentation of the pentose substrate in the photorespiration process. Both reactions occur simultaneously and in competition at the same active site. The polypeptide is Ribulose bisphosphate carboxylase large chain (Porphyridium aerugineum (Red microalga)).